Consider the following 20-residue polypeptide: Calreticulin (20 aa).

The protein belongs to the calreticulin family. Glycosylated.

It localises to the endoplasmic reticulum lumen. Its function is as follows. Molecular calcium-binding chaperone promoting folding, oligomeric assembly and quality control in the ER via the calreticulin/calnexin cycle. This lectin may interact transiently with almost all of the monoglucosylated glycoproteins that are synthesized in the ER. In Spinacia oleracea (Spinach), this protein is Calreticulin.